Here is a 120-residue protein sequence, read N- to C-terminus: Protein FAM241B (120 aa).

The interval 12-59 (QDDDPRVRTTTQHRSSSSQQGFFNRGHGAPPGGPGPRQQQAGARLGAA) is disordered. Low complexity-rich tracts occupy residues 19 to 39 (RTTT…RGHG) and 47 to 59 (PRQQ…LGAA). The residue at position 61 (serine 61) is a Phosphoserine. Residues 91-111 (ILLLFLLMMLGVRGLLLVGLV) form a helical membrane-spanning segment.

Belongs to the FAM241 family.

It is found in the membrane. Its function is as follows. May play a role in lysosome homeostasis. In Mus musculus (Mouse), this protein is Protein FAM241B.